The following is a 466-amino-acid chain: Argininosuccinate lyase (466 aa).

It belongs to the lyase 1 family. Argininosuccinate lyase subfamily.

The protein localises to the cytoplasm. The enzyme catalyses 2-(N(omega)-L-arginino)succinate = fumarate + L-arginine. It functions in the pathway amino-acid biosynthesis; L-arginine biosynthesis; L-arginine from L-ornithine and carbamoyl phosphate: step 3/3. The chain is Argininosuccinate lyase from Synechococcus sp. (strain ATCC 27144 / PCC 6301 / SAUG 1402/1) (Anacystis nidulans).